We begin with the raw amino-acid sequence, 138 residues long: Transcription antitermination protein NusB (138 aa).

The protein belongs to the NusB family.

Involved in transcription antitermination. Required for transcription of ribosomal RNA (rRNA) genes. Binds specifically to the boxA antiterminator sequence of the ribosomal RNA (rrn) operons. This Coxiella burnetii (strain CbuK_Q154) (Coxiella burnetii (strain Q154)) protein is Transcription antitermination protein NusB.